The primary structure comprises 117 residues: Large ribosomal subunit protein uL18 (117 aa).

The protein belongs to the universal ribosomal protein uL18 family. Part of the 50S ribosomal subunit; part of the 5S rRNA/L5/L18/L25 subcomplex. Contacts the 5S and 23S rRNAs.

This is one of the proteins that bind and probably mediate the attachment of the 5S RNA into the large ribosomal subunit, where it forms part of the central protuberance. The chain is Large ribosomal subunit protein uL18 from Phytoplasma mali (strain AT).